The following is a 147-amino-acid chain: D-aminoacyl-tRNA deacylase (147 aa).

The Gly-cisPro motif, important for rejection of L-amino acids motif lies at Gly136–Pro137.

Belongs to the DTD family. As to quaternary structure, homodimer.

It localises to the cytoplasm. It catalyses the reaction glycyl-tRNA(Ala) + H2O = tRNA(Ala) + glycine + H(+). The catalysed reaction is a D-aminoacyl-tRNA + H2O = a tRNA + a D-alpha-amino acid + H(+). Functionally, an aminoacyl-tRNA editing enzyme that deacylates mischarged D-aminoacyl-tRNAs. Also deacylates mischarged glycyl-tRNA(Ala), protecting cells against glycine mischarging by AlaRS. Acts via tRNA-based rather than protein-based catalysis; rejects L-amino acids rather than detecting D-amino acids in the active site. By recycling D-aminoacyl-tRNA to D-amino acids and free tRNA molecules, this enzyme counteracts the toxicity associated with the formation of D-aminoacyl-tRNA entities in vivo and helps enforce protein L-homochirality. This chain is D-aminoacyl-tRNA deacylase, found in Streptococcus agalactiae serotype III (strain NEM316).